Consider the following 379-residue polypeptide: UDP-4-amino-4-deoxy-L-arabinose--oxoglutarate aminotransferase (379 aa).

Lys-182 bears the N6-(pyridoxal phosphate)lysine mark.

Belongs to the DegT/DnrJ/EryC1 family. ArnB subfamily. In terms of assembly, homodimer. Pyridoxal 5'-phosphate serves as cofactor.

It catalyses the reaction UDP-4-amino-4-deoxy-beta-L-arabinose + 2-oxoglutarate = UDP-beta-L-threo-pentopyranos-4-ulose + L-glutamate. It participates in nucleotide-sugar biosynthesis; UDP-4-deoxy-4-formamido-beta-L-arabinose biosynthesis; UDP-4-deoxy-4-formamido-beta-L-arabinose from UDP-alpha-D-glucuronate: step 2/3. It functions in the pathway bacterial outer membrane biogenesis; lipopolysaccharide biosynthesis. In terms of biological role, catalyzes the conversion of UDP-4-keto-arabinose (UDP-Ara4O) to UDP-4-amino-4-deoxy-L-arabinose (UDP-L-Ara4N). The modified arabinose is attached to lipid A and is required for resistance to polymyxin and cationic antimicrobial peptides. This Klebsiella pneumoniae subsp. pneumoniae (strain ATCC 700721 / MGH 78578) protein is UDP-4-amino-4-deoxy-L-arabinose--oxoglutarate aminotransferase.